Here is a 70-residue protein sequence, read N- to C-terminus: Small ribosomal subunit protein bS21 (70 aa).

The protein belongs to the bacterial ribosomal protein bS21 family.

The polypeptide is Small ribosomal subunit protein bS21 (Laribacter hongkongensis (strain HLHK9)).